We begin with the raw amino-acid sequence, 420 residues long: Gamma-glutamyl phosphate reductase (420 aa).

Belongs to the gamma-glutamyl phosphate reductase family.

It is found in the cytoplasm. The enzyme catalyses L-glutamate 5-semialdehyde + phosphate + NADP(+) = L-glutamyl 5-phosphate + NADPH + H(+). It participates in amino-acid biosynthesis; L-proline biosynthesis; L-glutamate 5-semialdehyde from L-glutamate: step 2/2. In terms of biological role, catalyzes the NADPH-dependent reduction of L-glutamate 5-phosphate into L-glutamate 5-semialdehyde and phosphate. The product spontaneously undergoes cyclization to form 1-pyrroline-5-carboxylate. In Streptococcus pneumoniae (strain JJA), this protein is Gamma-glutamyl phosphate reductase.